The following is a 190-amino-acid chain: Small ribosomal subunit protein mS23 (190 aa).

Residue Ala-2 is modified to N-acetylalanine. An N6-succinyllysine modification is found at Lys-83. Lys-102 bears the N6-acetyllysine mark. The disordered stretch occupies residues 137–190 (KARTQQEGSQVSRKSESMGVESQTALEENPPLKEVPQAQHLESPGEESKGLSPP).

This sequence belongs to the mitochondrion-specific ribosomal protein mS23 family. As to quaternary structure, component of the mitochondrial ribosome small subunit (28S) which comprises a 12S rRNA and about 30 distinct proteins.

Its subcellular location is the mitochondrion. This Bos taurus (Bovine) protein is Small ribosomal subunit protein mS23.